The primary structure comprises 264 residues: MNNFASNDPLVIAGTVYSSRLLTGTGKFKDLDETRLATEAAGSQIVTVAIRRVNIGQDPHQPNLLNVLSPDRYAILPNTAGCYTAEDAVRTCRLARELLDGHRLTKLEVLGDKKTLYPDVVQTLKAAEQLVAEDFQVMVYTSDDPILAKRLEEIGCVAVMPLAAPIGSGLGVQNRYNLLEIIENAQVPIIVDAGVGTASDAAIAMELGCDAVLMNTAIAGARDPVLMASAMRKAVEAGREAFLAGRIPRKRYAAASSPVEGLVG.

Catalysis depends on Lys106, which acts as the Schiff-base intermediate with DXP. Residues Gly167, 193 to 194 (AG), and 215 to 216 (NT) each bind 1-deoxy-D-xylulose 5-phosphate.

The protein belongs to the ThiG family. As to quaternary structure, homotetramer. Forms heterodimers with either ThiH or ThiS.

The protein localises to the cytoplasm. It catalyses the reaction [ThiS sulfur-carrier protein]-C-terminal-Gly-aminoethanethioate + 2-iminoacetate + 1-deoxy-D-xylulose 5-phosphate = [ThiS sulfur-carrier protein]-C-terminal Gly-Gly + 2-[(2R,5Z)-2-carboxy-4-methylthiazol-5(2H)-ylidene]ethyl phosphate + 2 H2O + H(+). The protein operates within cofactor biosynthesis; thiamine diphosphate biosynthesis. In terms of biological role, catalyzes the rearrangement of 1-deoxy-D-xylulose 5-phosphate (DXP) to produce the thiazole phosphate moiety of thiamine. Sulfur is provided by the thiocarboxylate moiety of the carrier protein ThiS. In vitro, sulfur can be provided by H(2)S. The chain is Thiazole synthase from Xylella fastidiosa (strain Temecula1 / ATCC 700964).